Here is a 445-residue protein sequence, read N- to C-terminus: Argininosuccinate synthase (445 aa).

Residues 17 to 25 (AFSGGLDTS) and A43 each bind ATP. Residue Y99 coordinates L-citrulline. Residues G129 and T131 each contribute to the ATP site. L-aspartate contacts are provided by T131, N135, and D136. N135 provides a ligand contact to L-citrulline. D136 lines the ATP pocket. L-citrulline-binding residues include R139 and S192. ATP is bound at residue D194. L-citrulline-binding residues include T201, E203, and E280.

Belongs to the argininosuccinate synthase family. Type 2 subfamily. Homotetramer.

The protein resides in the cytoplasm. The enzyme catalyses L-citrulline + L-aspartate + ATP = 2-(N(omega)-L-arginino)succinate + AMP + diphosphate + H(+). It participates in amino-acid biosynthesis; L-arginine biosynthesis; L-arginine from L-ornithine and carbamoyl phosphate: step 2/3. This Ralstonia nicotianae (strain ATCC BAA-1114 / GMI1000) (Ralstonia solanacearum) protein is Argininosuccinate synthase (argG).